Consider the following 456-residue polypeptide: Bifunctional protein GlmU (456 aa).

Residues 1–229 (MLNNAMSVVI…LSEVEGVNNR (229 aa)) are pyrophosphorylase. Residues 11 to 14 (LAAG), Lys-25, Gln-76, 81 to 82 (GT), 103 to 105 (YGD), Gly-140, Glu-154, Asn-169, and Asn-227 each bind UDP-N-acetyl-alpha-D-glucosamine. Residue Asp-105 participates in Mg(2+) binding. Mg(2+) is bound at residue Asn-227. Residues 230–250 (LQLSRLERVYQSEQAEKLLLA) are linker. Positions 251 to 456 (GVMLRDPARF…EGWRRPVKKK (206 aa)) are N-acetyltransferase. The UDP-N-acetyl-alpha-D-glucosamine site is built by Arg-333 and Lys-351. The active-site Proton acceptor is His-363. The UDP-N-acetyl-alpha-D-glucosamine site is built by Tyr-366 and Asn-377. Residues Ala-380, 386 to 387 (NY), Ser-405, Ala-423, and Arg-440 contribute to the acetyl-CoA site.

This sequence in the N-terminal section; belongs to the N-acetylglucosamine-1-phosphate uridyltransferase family. The protein in the C-terminal section; belongs to the transferase hexapeptide repeat family. As to quaternary structure, homotrimer. Mg(2+) is required as a cofactor.

Its subcellular location is the cytoplasm. It carries out the reaction alpha-D-glucosamine 1-phosphate + acetyl-CoA = N-acetyl-alpha-D-glucosamine 1-phosphate + CoA + H(+). The catalysed reaction is N-acetyl-alpha-D-glucosamine 1-phosphate + UTP + H(+) = UDP-N-acetyl-alpha-D-glucosamine + diphosphate. It participates in nucleotide-sugar biosynthesis; UDP-N-acetyl-alpha-D-glucosamine biosynthesis; N-acetyl-alpha-D-glucosamine 1-phosphate from alpha-D-glucosamine 6-phosphate (route II): step 2/2. The protein operates within nucleotide-sugar biosynthesis; UDP-N-acetyl-alpha-D-glucosamine biosynthesis; UDP-N-acetyl-alpha-D-glucosamine from N-acetyl-alpha-D-glucosamine 1-phosphate: step 1/1. Its pathway is bacterial outer membrane biogenesis; LPS lipid A biosynthesis. Its function is as follows. Catalyzes the last two sequential reactions in the de novo biosynthetic pathway for UDP-N-acetylglucosamine (UDP-GlcNAc). The C-terminal domain catalyzes the transfer of acetyl group from acetyl coenzyme A to glucosamine-1-phosphate (GlcN-1-P) to produce N-acetylglucosamine-1-phosphate (GlcNAc-1-P), which is converted into UDP-GlcNAc by the transfer of uridine 5-monophosphate (from uridine 5-triphosphate), a reaction catalyzed by the N-terminal domain. The sequence is that of Bifunctional protein GlmU from Escherichia fergusonii (strain ATCC 35469 / DSM 13698 / CCUG 18766 / IAM 14443 / JCM 21226 / LMG 7866 / NBRC 102419 / NCTC 12128 / CDC 0568-73).